A 350-amino-acid chain; its full sequence is Putative zinc metalloprotease jhp_0242 (350 aa).

Zn(2+) is bound at residue His-16. Glu-17 is a catalytic residue. Position 20 (His-20) interacts with Zn(2+). 5 helical membrane-spanning segments follow: residues 43 to 63 (WFFK…GGYV), 94 to 114 (LWIL…VYFF), 249 to 269 (LIMG…VGAL), 277 to 297 (MLLL…LLPI), and 326 to 346 (LWLV…FNDI). Positions 108–177 (AVLVYFFLAL…GELILEIERN (70 aa)) constitute a PDZ domain.

It belongs to the peptidase M50B family. Zn(2+) is required as a cofactor.

The protein localises to the cell inner membrane. In Helicobacter pylori (strain J99 / ATCC 700824) (Campylobacter pylori J99), this protein is Putative zinc metalloprotease jhp_0242.